The following is a 475-amino-acid chain: Phenolic acid decarboxylase (475 aa).

Residues Asn-161, His-183, and Glu-225 each contribute to the Mn(2+) site. Residues 161–166 (NVGIYR) and 182–183 (MH) contribute to the prenylated FMN site. Catalysis depends on Glu-274, which acts as the Proton donor.

It belongs to the UbiD family. YclC subfamily. Prenylated FMN is required as a cofactor. It depends on Mn(2+) as a cofactor.

The enzyme catalyses 4-hydroxybenzoate + H(+) = phenol + CO2. It catalyses the reaction vanillate + H(+) = guaiacol + CO2. Its function is as follows. Involved in the non-oxidative decarboxylation and detoxification of phenolic derivatives under both aerobic and anaerobic conditions. Phenolic acid decarboxylase that catalyzes the reversible decarboxylation of 4-hydroxybenzoate and vanillate. The polypeptide is Phenolic acid decarboxylase (Escherichia coli O157:H7).